Consider the following 678-residue polypeptide: Probable E3 ubiquitin ligase complex SCF subunit sconB (678 aa).

A disordered region spans residues 1 to 52; that stretch reads MSTEDNHDSQILTARHRSDASEQSFKSLFGGPSSEDGKETEPDTHDHNHSFS. Positions 35-49 are enriched in basic and acidic residues; sequence EDGKETEPDTHDHNH. Positions 178–224 constitute an F-box domain; it reads IDFITALPPEIAFKILCYLDTTSLCKASQVSRGWRALADDDVVWHRM. Residues 266–287 are disordered; that stretch reads VVGPRSPDASAESPPSGKRKLE. WD repeat units follow at residues 347–375, 387–415, 427–455, 466–496, 508–543, 553–595, 607–635, and 647–675; these read GHTN…KIWD, GHES…KVWN, GHRG…KIWN, GHTD…RLWD, GHVG…TSGD, MGLE…RLWE, GHLE…KIWD, and GHSG…RMYS.

Belongs to the WD repeat MET30/SCONB/SCON-2 family. Component of the SCF(sconB) E3 ubiquitin ligase complex.

The protein operates within protein modification; protein ubiquitination. Functionally, component of the SCF(sconB) E3 ubiquitin ligase complex involved in the regulation of sulfur metabolite repression, probably by mediating the inactivation or degradation of the metR transcription factor. The sequence is that of Probable E3 ubiquitin ligase complex SCF subunit sconB (sconB) from Emericella nidulans (strain FGSC A4 / ATCC 38163 / CBS 112.46 / NRRL 194 / M139) (Aspergillus nidulans).